We begin with the raw amino-acid sequence, 124 residues long: Small ribosomal subunit protein uS12 (124 aa).

A 3-methylthioaspartic acid modification is found at D89.

It belongs to the universal ribosomal protein uS12 family. As to quaternary structure, part of the 30S ribosomal subunit. Contacts proteins S8 and S17. May interact with IF1 in the 30S initiation complex.

Its function is as follows. With S4 and S5 plays an important role in translational accuracy. In terms of biological role, interacts with and stabilizes bases of the 16S rRNA that are involved in tRNA selection in the A site and with the mRNA backbone. Located at the interface of the 30S and 50S subunits, it traverses the body of the 30S subunit contacting proteins on the other side and probably holding the rRNA structure together. The combined cluster of proteins S8, S12 and S17 appears to hold together the shoulder and platform of the 30S subunit. The sequence is that of Small ribosomal subunit protein uS12 from Shewanella sp. (strain ANA-3).